A 499-amino-acid polypeptide reads, in one-letter code: MVFSSNVFLFLFLPLFLGLYYLSPARYRNLLLLTASYVFYAWWRIDFLGLFAAVTVFNYWIGLRIGAAGVRTQSAQRWLTLGVVVDLCVLGYFKYANFGVDSLNAIITSFGVEPFVVTHILLPIGISFYVFESISYIIDVYRGDTPATRNLVDFAAFVAIFPHLIAGPVLRFRDLVDQFNHRTHTLDKFAEGCTRFMQGFIKKVFIADSLAPIADHCFALSDPTTGDAWLGALAYTAQLYFDFSGYSDMAIGLGLMIGFRFMENFNQPYISQSITEFWRRWHISLSTWLRDYLYISLGGNRGTTFQTYRNLILTMLLGGLWHGANWTFIIWGAWHGTWLAIERALRIDAAPKTIRPLRWVFAFLLVMVGWVIFRAENLDVAWRMYAAMFSFGDWTLSDLNKAQLTSLQIATLLLAYVVIAVYGIRQFYAQPLTGAPKAKANDQADAPQGIVHASSGTLAYSQAIDIPALATRVAVLLLFAASVLKLSAQSFSPFLYFQF.

11 helical membrane passes run 7 to 25, 40 to 62, 78 to 100, 115 to 137, 150 to 172, 239 to 261, 312 to 334, 354 to 373, 380 to 397, 407 to 429, and 475 to 497; these read VFLFLFLPLFLGLYYLSPA, YAWWRIDFLGLFAAVTVFNYWIG, WLTLGVVVDLCVLGYFKYANFGV, FVVTHILLPIGISFYVFESISYI, NLVDFAAFVAIFPHLIAGPVLRF, LYFDFSGYSDMAIGLGLMIGFRF, ILTMLLGGLWHGANWTFIIWGAW, IRPLRWVFAFLLVMVGWVIF, VAWRMYAAMFSFGDWTLS, LQIATLLLAYVVIAVYGIRQFYA, and VLLLFAASVLKLSAQSFSPFLYF. The active site involves His322.

This sequence belongs to the membrane-bound acyltransferase family.

It localises to the cell inner membrane. The protein operates within glycan biosynthesis; alginate biosynthesis. Its function is as follows. Together with AlgJ and AlgF, forms an inner membrane complex which probably interacts with the alginate polymerization-transport complex and adds acetyl groups at the O-2 and O-3 positions of mannuronate residues. Acetylation of alginate increases cyst resistance to desiccation. This Azotobacter vinelandii protein is Probable alginate O-acetylase AlgI (algI).